A 419-amino-acid polypeptide reads, in one-letter code: Gamma-glutamyl phosphate reductase (419 aa).

Belongs to the gamma-glutamyl phosphate reductase family.

It localises to the cytoplasm. It carries out the reaction L-glutamate 5-semialdehyde + phosphate + NADP(+) = L-glutamyl 5-phosphate + NADPH + H(+). The protein operates within amino-acid biosynthesis; L-proline biosynthesis; L-glutamate 5-semialdehyde from L-glutamate: step 2/2. Functionally, catalyzes the NADPH-dependent reduction of L-glutamate 5-phosphate into L-glutamate 5-semialdehyde and phosphate. The product spontaneously undergoes cyclization to form 1-pyrroline-5-carboxylate. This chain is Gamma-glutamyl phosphate reductase, found in Azoarcus sp. (strain BH72).